A 548-amino-acid polypeptide reads, in one-letter code: Chaperonin GroEL (548 aa).

Residues 29 to 32, Lys-50, 86 to 90, Gly-414, 478 to 480, and Asp-494 contribute to the ATP site; these read TMGP, DGTTT, and NAA.

Belongs to the chaperonin (HSP60) family. As to quaternary structure, forms a cylinder of 14 subunits composed of two heptameric rings stacked back-to-back. Interacts with the co-chaperonin GroES.

The protein localises to the cytoplasm. The enzyme catalyses ATP + H2O + a folded polypeptide = ADP + phosphate + an unfolded polypeptide.. Together with its co-chaperonin GroES, plays an essential role in assisting protein folding. The GroEL-GroES system forms a nano-cage that allows encapsulation of the non-native substrate proteins and provides a physical environment optimized to promote and accelerate protein folding. Functionally, may play a protective role against the defense mechanisms generated by the infected macrophages. In Legionella pneumophila, this protein is Chaperonin GroEL.